An 873-amino-acid chain; its full sequence is DNA mismatch repair protein PMS1 (873 aa).

A DNA- and ATP-binding region spans residues 1–357 (MTQIHQINDI…FKTTLSDYYN (357 aa)). Over residues 379–402 (LKTEVFDDRSTTHESDNENYHTAR) the composition is skewed to basic and acidic residues. Residues 379–423 (LKTEVFDDRSTTHESDNENYHTARSESNQSNHAHFNSTTGVIDKS) form a disordered region. Ser393 carries the phosphoserine modification. The span at 403–423 (SESNQSNHAHFNSTTGVIDKS) shows a compositional bias: polar residues. Ser566 is modified (phosphoserine). An interaction with MLH1 region spans residues 661–873 (YLTLTVSKND…WSSFSKDYEI (213 aa)).

It belongs to the DNA mismatch repair MutL/HexB family. Heterodimer of MLH1 and PMS1, called MutLalpha, which is the major MMR MutL activity correcting base-base mismatches as well as IDLs. The heterodimer binds double strand DNA independently of a mismatch with positive cooperativity and has more than one DNA binding site. Forms a ternary complex with either the MSH2-MSH6 (MutSalpha) or the MSH2-MSH3 heterodimer (MutSbeta), which recognize and bind to mismatch DNA. Ternary complex formation is promoted by ATP binding.

It localises to the nucleus. Functionally, required for DNA mismatch repair (MMR), correcting base-base mismatches and insertion-deletion loops (IDLs) resulting from DNA replication, DNA damage or from recombination events between non-identical sequences during meiosis. Component of the MutLalpha heterodimer that forms a ternary complex with the MutS heterodimers, which initially recognize the DNA mismatches. This complex is thought to be responsible for directing the downstream MMR events, including strand discrimination, excision, and resynthesis. Plays a major role in maintaining the genetic stability of simple sequence repeats and in the repair of heteroduplex sites present in meiotic recombination intermediates. The chain is DNA mismatch repair protein PMS1 (PMS1) from Saccharomyces cerevisiae (strain ATCC 204508 / S288c) (Baker's yeast).